Reading from the N-terminus, the 221-residue chain is Alpha-ketoglutarate-dependent dioxygenase alkB homolog 7, mitochondrial (221 aa).

The N-terminal 23 residues, 1 to 23, are a transit peptide targeting the mitochondrion; sequence MAGSRRLAMRLLSGCAWVRGSDS. Fe cation is bound by residues His-121 and Asp-123. Tyr-165 contacts 2-oxoglutarate. His-177 lines the Fe cation pocket. Residues 197-199 and Arg-203 each bind 2-oxoglutarate; that span reads RIS.

This sequence belongs to the alkB family. Fe(2+) serves as cofactor. In terms of tissue distribution, widely expressed.

The protein resides in the mitochondrion matrix. Its function is as follows. May function as protein hydroxylase; can catalyze auto-hydroxylation at Leu-110 (in vitro), but this activity may be due to the absence of the true substrate. Required to induce programmed necrosis in response to DNA damage caused by cytotoxic alkylating agents. Acts by triggering the collapse of mitochondrial membrane potential and loss of mitochondrial function that leads to energy depletion and cell death. ALKBH7-mediated necrosis is probably required to prevent the accumulation of cells with DNA damage. Does not display DNA demethylase activity. Involved in fatty acid metabolism. The polypeptide is Alpha-ketoglutarate-dependent dioxygenase alkB homolog 7, mitochondrial (Alkbh7) (Mus musculus (Mouse)).